The following is a 135-amino-acid chain: MAQQKSAAAASQRARKKVKKNVADGIAHVHTSFNNTIITITDRQGNALSWATSGGQGFKGSRKSTPFAAQVAAEVAGKTAIECGIKSLEAQIKGPGPGRESAVRALNSLGIKITEIQDVTPVPHNGCRPPKRRRI.

This sequence belongs to the universal ribosomal protein uS11 family. In terms of assembly, part of the 30S ribosomal subunit. Interacts with proteins S7 and S18. Binds to IF-3.

Its function is as follows. Located on the platform of the 30S subunit, it bridges several disparate RNA helices of the 16S rRNA. Forms part of the Shine-Dalgarno cleft in the 70S ribosome. This chain is Small ribosomal subunit protein uS11, found in Polynucleobacter necessarius subsp. necessarius (strain STIR1).